Consider the following 711-residue polypeptide: Zinc finger CCCH domain-containing protein 32 (711 aa).

Positions 1–21 (MEADGAAAAAAAGEASTEAGA) are enriched in low complexity. The segment at 1 to 23 (MEADGAAAAAAAGEASTEAGARP) is disordered. 3 consecutive C3H1-type zinc fingers follow at residues 31–60 (LRRNTDCVYFLASPLTCKKGNECDFRHSDN), 62–88 (RMNPRDCWYWLNSNCLNPKCPFRHPPI), and 112–139 (GKQLVPCYYFKKGNCLKGDRCAFYHGPQ). Disordered stretches follow at residues 221–246 (KSEKVKSSTPAALKESFTTSSGGDHP), 339–376 (RFNGMDEQDQMGHMYDGYERKRRRSSERSMERPFHSER), 405–561 (SSLA…EGPK), and 573–701 (AAWA…DDDD). Composition is skewed to basic and acidic residues over residues 364–376 (SERSMERPFHSER) and 413–427 (RNGEQRRRDERYRER). Residues 428 to 437 (AHGHRSHRDH) are compositionally biased toward basic residues. Basic and acidic residues-rich tracts occupy residues 460-509 (SPDR…RRSS) and 585-594 (KQDKSAEVSH). 2 stretches are compositionally biased toward acidic residues: residues 648 to 663 (EDIIEVDPVENQDADN) and 686 to 701 (ENAYEDDDEEYDDDDD).

The chain is Zinc finger CCCH domain-containing protein 32 from Oryza sativa subsp. japonica (Rice).